We begin with the raw amino-acid sequence, 123 residues long: MPASRLVPLGAVLLLGLLLLLELPPVTGTGADKPGVCPQLSADLNCTQDCRADQDCAENLKCCRAGCSAICSIPNEKEGSCPSIDFPQLGICQDLCQVDSQCPGKMKCCLNGCGKVSCVTPNF.

The N-terminal stretch at 1–28 (MPASRLVPLGAVLLLGLLLLLELPPVTG) is a signal peptide. WAP domains lie at 30 to 71 (GADK…SAIC) and 74 to 122 (PNEK…VTPN). 8 cysteine pairs are disulfide-bonded: Cys-37–Cys-63, Cys-46–Cys-67, Cys-50–Cys-62, Cys-56–Cys-71, Cys-81–Cys-109, Cys-92–Cys-113, Cys-96–Cys-108, and Cys-102–Cys-118. N-linked (GlcNAc...) asparagine glycosylation occurs at Asn-45.

Homotrimer; disulfide-linked. Epididymis.

The protein resides in the secreted. Broad range protease inhibitor. In Oryctolagus cuniculus (Rabbit), this protein is WAP four-disulfide core domain protein 2 (WFDC2).